The chain runs to 359 residues: Dual-specificity RNA methyltransferase RlmN 1 (359 aa).

The active-site Proton acceptor is Glu96. One can recognise a Radical SAM core domain in the interval 102–335 (FKGRATVCIS…STVRQRRGID (234 aa)). Residues Cys109 and Cys340 are joined by a disulfide bond. [4Fe-4S] cluster-binding residues include Cys116, Cys120, and Cys123. S-adenosyl-L-methionine is bound by residues 166-167 (GE), Ser198, 221-223 (SLH), and Asn297. The S-methylcysteine intermediate role is filled by Cys340.

It belongs to the radical SAM superfamily. RlmN family. Requires [4Fe-4S] cluster as cofactor.

The protein resides in the cytoplasm. It catalyses the reaction adenosine(2503) in 23S rRNA + 2 reduced [2Fe-2S]-[ferredoxin] + 2 S-adenosyl-L-methionine = 2-methyladenosine(2503) in 23S rRNA + 5'-deoxyadenosine + L-methionine + 2 oxidized [2Fe-2S]-[ferredoxin] + S-adenosyl-L-homocysteine. The enzyme catalyses adenosine(37) in tRNA + 2 reduced [2Fe-2S]-[ferredoxin] + 2 S-adenosyl-L-methionine = 2-methyladenosine(37) in tRNA + 5'-deoxyadenosine + L-methionine + 2 oxidized [2Fe-2S]-[ferredoxin] + S-adenosyl-L-homocysteine. Specifically methylates position 2 of adenine 2503 in 23S rRNA and position 2 of adenine 37 in tRNAs. m2A2503 modification seems to play a crucial role in the proofreading step occurring at the peptidyl transferase center and thus would serve to optimize ribosomal fidelity. The polypeptide is Dual-specificity RNA methyltransferase RlmN 1 (Myxococcus xanthus (strain DK1622)).